A 74-amino-acid chain; its full sequence is Progonadoliberin-3 (74 aa).

A signal peptide spans 1–15 (VRVVVLALVAQVTLS). Gln16 is modified (pyrrolidone carboxylic acid). Position 25 is a glycine amide (Gly25).

It belongs to the GnRH family.

It is found in the secreted. Functionally, stimulates the secretion of gonadotropins. The chain is Progonadoliberin-3 (gnrh3) from Oncorhynchus tshawytscha (Chinook salmon).